The primary structure comprises 186 residues: Probable RNA 2'-phosphotransferase (186 aa).

It belongs to the KptA/TPT1 family.

Its function is as follows. Removes the 2'-phosphate from RNA via an intermediate in which the phosphate is ADP-ribosylated by NAD followed by a presumed transesterification to release the RNA and generate ADP-ribose 1''-2''-cyclic phosphate (APPR&gt;P). May function as an ADP-ribosylase. The protein is Probable RNA 2'-phosphotransferase of Hahella chejuensis (strain KCTC 2396).